The primary structure comprises 157 residues: Lectin (157 aa).

C37 and C54 are disulfide-bonded.

Homodimer. Detected in fruits (at protein level).

It localises to the secreted. Its function is as follows. Binds with high affinity specifically to chito-oligosaccharides. May play a role in plant defense against pathogens by directly binding with the chitin cell wall. Forms filamentous structures at higher concentrations and may promote wound healing by forming filaments with phloem proteins like PP1. The sequence is that of Lectin from Coccinia grandis (Ivy gourd).